The following is a 488-amino-acid chain: Germacrene A hydroxylase (488 aa).

Residues 7–23 (TSIALATILFFVYKFAT) traverse the membrane as a helical; Signal-anchor for type II membrane protein segment. Asparagine 169, asparagine 260, asparagine 379, and asparagine 410 each carry an N-linked (GlcNAc...) asparagine glycan. Residue cysteine 432 participates in heme binding.

It belongs to the cytochrome P450 family. Expressed in floral glandular trichomes.

It localises to the endoplasmic reticulum membrane. The catalysed reaction is (+)-(R)-germacrene A + 3 reduced [NADPH--hemoprotein reductase] + 3 O2 = germacra-1(10),4,11(13)-trien-12-oate + 3 oxidized [NADPH--hemoprotein reductase] + 4 H2O + 4 H(+). The protein operates within secondary metabolite biosynthesis; terpenoid biosynthesis. Its function is as follows. Involved in the biosynthesis of germacrene-derived sesquiterpene lactones. Component of the parthenolide biosynthetic pathway; parthenolide and conjugates are promising anti-cancer drugs highly active against colon cancer cells. Catalyzes three consecutive oxidations of germacrene A to produce germacrene A acid. This is Germacrene A hydroxylase from Tanacetum parthenium (Feverfew).